Reading from the N-terminus, the 577-residue chain is Cell pattern formation-associated protein stuA (577 aa).

The disordered stretch occupies residues 1-41 (MNQPQPYMDQHAPAPPPASNMTQYSNYGAPQPLQPATHGYG). Polar residues predominate over residues 19–28 (SNMTQYSNYG). In terms of domain architecture, HTH APSES-type spans 111–217 (RVTATLWEDE…HNIGALLYHP (107 aa)). Residues 145–166 (GTKLLNVAGMTRGRRDGILKSE) constitute a DNA-binding region (H-T-H motif). Disordered regions lie at residues 228–487 (ATMA…QLPS) and 518–577 (QYPA…AVRR). Composition is skewed to polar residues over residues 238-251 (SQEY…TQAP) and 319-333 (AVNS…SQGM). Positions 334 to 350 (PQYQTSQPPYTQSYSTP) are enriched in low complexity. Polar residues predominate over residues 351–364 (GSYSQPQYTHQQPG). The segment covering 390–399 (AENDHPDHKV) has biased composition (basic and acidic residues). Residues 465-479 (TPRTTNPYTGYNNTP) are compositionally biased toward low complexity. The tract at residues 526–552 (KRGREDDDQVDPYGRPSSALGEHKRQR) is nuclear localization domain.

Belongs to the EFG1/PHD1/stuA family.

It localises to the nucleus. Transcription factor that regulates asexual reproduction. Binds the StuA-response elements (StRE) with the consensus sequence 5'-(A/T)CGCG(T/A)N(A/C)-3' at the promoters of target genes. This Dothistroma septosporum (strain NZE10 / CBS 128990) (Red band needle blight fungus) protein is Cell pattern formation-associated protein stuA.